Consider the following 160-residue polypeptide: SKP1-like protein 1A (160 aa).

Residues 102–160 (ILAANYLNIKNLLDLTCQTVADMIKGKTPEEIRTTFNIKNDFTPEEEEEVRRENQWAFE) form an interaction with the F-box domain of F-box proteins region.

This sequence belongs to the SKP1 family. As to quaternary structure, part of a SCF E3 ubiquitin ligase complex composed of SKP1, CUL1, RBX1 (RBX1A or RBX1B) and F-box proteins. Interacts with SKIP1, SKIP2, SKIP3, SKIP4, SKIP6, FIB1/SKIP7, SKIP8, PP2A11/SKIP10, SKIP11, PP2B11/SKIP12, PP2A14/SKIP13, SKIP14, SKIP15, SKIP16, SKIP19/FBL20, SKIP20, PP2B1/SKIP21, SKIP22, SKIP23, SKIP24, SKIP25, TULP10/SKIP26, SKIP27, SKIP28/MEE11, AFR/SKIP29, SKIP30, SKIP31, SKIP32/FBP7, SKIP33, SKIP35, ADO1/ZTL, ADO2/LKP2, ADO3/FKF1, AFR, COI1, DOR, EBF1, EBF2, EID1, ORE9, PP2A13/SKIP9, TIR1, UFO, SKP2A, CPR1/CPR30, FBL17, NUP58, At1g55000, At1g67340, At1g78100, At3g04660, At3g61590, At4g38940 and At5g49610. The SKP1A subunit of the SCF E3 ubiquitin ligase complex can interact directly with KIN10, KIN11 and the proteasome subunit PAD1. This interaction can be disrupted by PRL1. In case of polerovirus infection, part of a SCF P0 complex composed of the viral silencing suppressor P0, SKP1 and CUL1. Interacts with turnip yellows virus P0. Interacts with VBF and Agrobacterium virF. Binds to KIB1. In terms of tissue distribution, accumulates only in meristematic cells. Expressed in inflorescence, shoot and root apical meristems, as well as in developing organs such as gametocytes and seeds. Also detected in cortical layer and epidermis of roots, leaves, pith and vascular bundle of young stem, young floral buds and organ primordia, pollen and through the valve of siliques. Not detectable in mature root tissues.

The protein localises to the nucleus. The protein resides in the cytoplasm. It is found in the cytoskeleton. Its subcellular location is the spindle. It localises to the phragmoplast. It functions in the pathway protein modification; protein ubiquitination. Involved in ubiquitination and subsequent proteasomal degradation of target proteins. Together with CUL1, RBX1 and a F-box protein, it forms a SCF E3 ubiquitin ligase complex. The functional specificity of this complex depends on the type of F-box protein. In the SCF complex, it serves as an adapter that links the F-box protein to CUL1. SCF(UFO) is required for vegetative and floral organ development as well as for male gametogenesis. SCF(TIR1) is involved in auxin signaling pathway. SCF(COI1) regulates responses to jasmonates. SCF(EID1) and SCF(AFR) are implicated in phytochrome A light signaling. SCF(ADO1), SCF(ADO2), SCF(ADO3) are related to the circadian clock. SCF(ORE9) seems to be involved in senescence. SCF(EBF1/EBF2) may regulate ethylene signaling. Plays a role during embryogenesis and early postembryonic development, especially during cell elongation and division. Contributes to the correct chromosome segregation during tetrad formation. The protein is SKP1-like protein 1A of Arabidopsis thaliana (Mouse-ear cress).